The chain runs to 60 residues: UPF0434 protein PC1_1771 (60 aa).

The protein belongs to the UPF0434 family.

This Pectobacterium carotovorum subsp. carotovorum (strain PC1) protein is UPF0434 protein PC1_1771.